The following is a 471-amino-acid chain: tRNA-2-methylthio-N(6)-dimethylallyladenosine synthase (471 aa).

Residues Leu31–Asn149 enclose the MTTase N-terminal domain. Residues Cys40, Cys76, Cys110, Cys186, Cys190, and Cys193 each contribute to the [4Fe-4S] cluster site. In terms of domain architecture, Radical SAM core spans Arg172 to Glu402. A TRAM domain is found at Ala405–Glu468.

This sequence belongs to the methylthiotransferase family. MiaB subfamily. In terms of assembly, monomer. The cofactor is [4Fe-4S] cluster.

It localises to the cytoplasm. The catalysed reaction is N(6)-dimethylallyladenosine(37) in tRNA + (sulfur carrier)-SH + AH2 + 2 S-adenosyl-L-methionine = 2-methylsulfanyl-N(6)-dimethylallyladenosine(37) in tRNA + (sulfur carrier)-H + 5'-deoxyadenosine + L-methionine + A + S-adenosyl-L-homocysteine + 2 H(+). Catalyzes the methylthiolation of N6-(dimethylallyl)adenosine (i(6)A), leading to the formation of 2-methylthio-N6-(dimethylallyl)adenosine (ms(2)i(6)A) at position 37 in tRNAs that read codons beginning with uridine. This chain is tRNA-2-methylthio-N(6)-dimethylallyladenosine synthase, found in Thermoanaerobacter pseudethanolicus (strain ATCC 33223 / 39E) (Clostridium thermohydrosulfuricum).